The sequence spans 298 residues: Tyrosine recombinase XerD (298 aa).

Residues T3–L88 enclose the Core-binding (CB) domain. A Tyr recombinase domain is found at P109 to A292. Residues R149, K173, H244, R247, and H270 contribute to the active site. The O-(3'-phospho-DNA)-tyrosine intermediate role is filled by Y279.

This sequence belongs to the 'phage' integrase family. XerD subfamily. As to quaternary structure, forms a cyclic heterotetrameric complex composed of two molecules of XerC and two molecules of XerD.

Its subcellular location is the cytoplasm. Site-specific tyrosine recombinase, which acts by catalyzing the cutting and rejoining of the recombining DNA molecules. The XerC-XerD complex is essential to convert dimers of the bacterial chromosome into monomers to permit their segregation at cell division. It also contributes to the segregational stability of plasmids. The protein is Tyrosine recombinase XerD of Pseudomonas aeruginosa (strain ATCC 15692 / DSM 22644 / CIP 104116 / JCM 14847 / LMG 12228 / 1C / PRS 101 / PAO1).